Consider the following 138-residue polypeptide: Isochorismatase-like protein asqB (138 aa).

The protein belongs to the isochorismatase family.

It catalyses the reaction [(1'E)-5'-(3',3'-dimethyloxiran-2'-yl)-3'-hydroxy-3'-methylpent-1'-en-1'-yl]-quinolinone B = yaequinolone C. It functions in the pathway secondary metabolite biosynthesis. The protein operates within alkaloid biosynthesis. It participates in mycotoxin biosynthesis. In terms of biological role, isochorismatase-like protein; part of the gene cluster that mediates the biosynthesis of the aspoquinolone mycotoxins. Within the pathway, asqB converts [(1'E)-5'-(3',3'-dimethyloxiran-2'-yl)-3'-hydroxy-3'-methylpent-1'-en-1'-yl]-quinolinone B into yaequinolone C. The first step of the pathway is catalyzed by the nonribosomal peptide synthetase asqK that condenses anthranilic acid and O-methyl-L-tyrosine to produce 4'-methoxycyclopeptin. 4'-methoxycyclopeptin is then converted to 4'-methoxydehydrocyclopeptin by the ketoglutarate-dependent dioxygenase asqJ. AsqJ also converts its first product 4'-methoxydehydrocyclopeptin to 4'-methoxycyclopenin. The following conversion of 4'-methoxycyclopenin into 4'-methoxyviridicatin is catalyzed by the cyclopenase asqI. 4'-methoxyviridicatin is the precursor of quinolone natural products, and is further converted to quinolinone B. The prenyltransferase asqH1 then catalyzes the canonical Friedel-Crafts alkylation of quinolinone B with dimethylallyl cation to yield dimethylallyl quinolone, which is subjected to FAD-dependent dehydrogenation by the FAD-linked oxidoreductase asqF to yield conjugated aryl diene. The delta(3') double bond then serves as the site of the second alkylation with DMAPP catalyzed by the prenyltransferase asqH2 to yield a carbenium ion intermediate, which can be attacked by H(2)O to yield a styrenyl quinolone containing a C3'-hydroxyprenyl chain. The FAD-dependent monooxygenase asqG performs epoxidation of the terminal C7'-C8' olefin. Finally, after dehydratation of the epoxide at C3 by asqC, the quinolone epoxide rearrangement protein asqO catalyzes an enzymatic 3-exo-tet cyclization to yield the cyclopropyl-THF ring system in aspoquinolone. The protein is Isochorismatase-like protein asqB of Emericella nidulans (strain FGSC A4 / ATCC 38163 / CBS 112.46 / NRRL 194 / M139) (Aspergillus nidulans).